The primary structure comprises 1143 residues: AP-3 complex subunit delta (1143 aa).

8 HEAT repeats span residues 129–166 (DLAR…RYPE), 167–203 (SLRP…RNPK), 205–242 (YLPL…HEPR), 245–279 (KKLI…SDHI), 280–317 (PLMK…IHPK), 318–354 (AVSE…KKNI), 356–389 (DIVF…MGTY), and 416–455 (LIAS…PTEG). Disordered regions lie at residues 520-541 (KIPS…DQNE), 634-692 (QEPI…RHPI), 704-728 (KQAN…PENI), 741-792 (HVGA…NDAL), and 829-899 (KKNA…QAAA). Residues 524 to 540 (LDDDDEEEEAQEEEDQN) are compositionally biased toward acidic residues. Residues 526–550 (DDDEEEEAQEEEDQNEITHEIVQEC) adopt a coiled-coil conformation. Residues 653–662 (HQKKHHKHHR) are compositionally biased toward basic residues. A compositionally biased stretch (acidic residues) spans 666–675 (DGDDDEDDET). Residues 814-835 (TDIIKEKEREMAMLAKKNAKLS) are a coiled coil. Residues 840–849 (PSTANYSEVT) are compositionally biased toward polar residues. Composition is skewed to low complexity over residues 854-867 (APAK…AAGS) and 881-899 (KPAA…QAAA). In terms of domain architecture, GAE spans 914-1016 (KTILDDDNFK…FTLLASPSSS (103 aa)).

Belongs to the adaptor complexes large subunit family. As to quaternary structure, adaptor protein complex 3 (AP-3) is a heterotetramer composed of two large adaptins (delta-type subunit and beta-type subunit), a medium adaptin (mu-type subunit) and a small adaptin (sigma-type subunit).

The protein localises to the endosome membrane. In terms of biological role, part of the AP-3 complex, an adaptor-related complex which is essential for the compartmentalization of the endocytic pathway. The polypeptide is AP-3 complex subunit delta (ap3d1) (Dictyostelium discoideum (Social amoeba)).